A 287-amino-acid chain; its full sequence is Small ribosomal subunit protein uS2 (287 aa).

The span at 254 to 277 (LASATASATPSATASTTALTDAPA) shows a compositional bias: low complexity. A disordered region spans residues 254 to 287 (LASATASATPSATASTTALTDAPAGATEPTTDAS).

The protein belongs to the universal ribosomal protein uS2 family.

This is Small ribosomal subunit protein uS2 (rpsB) from Mycobacterium tuberculosis (strain CDC 1551 / Oshkosh).